A 191-amino-acid chain; its full sequence is MPKYVRRKEVLEVLKVHYQTLYRMEEKGLIEVKRTNGGHRLYNLEKYLRDNGLDNKEKKGICYCRVSSKKQIKDLNRQVEYMEKNYPEYEIIKDIGSGINMERKGLLQLIQMAIDGEISEVVVTYKDRLARFGFELIEWIIKTYSNGQIKIIHKREEETPEEEITRDILQIMNVYVAKINGKKSGKLKAKK.

Residues 11–30 (LEVLKVHYQTLYRMEEKGLI) constitute a DNA-binding region (H-T-H motif). A Resolvase/invertase-type recombinase catalytic domain is found at 59–191 (KGICYCRVSS…KKSGKLKAKK (133 aa)). A coiled-coil region spans residues 65-91 (RVSSKKQIKDLNRQVEYMEKNYPEYEI). Catalysis depends on Ser-67, which acts as the O-(5'-phospho-DNA)-serine intermediate.

This sequence belongs to the site-specific recombinase resolvase family.

Resolvase catalyzes the resolution (a site-specific recombination) of the cointegrated replicon to yield the final transposition products. This is Putative resolvase L103 from Acanthamoeba polyphaga (Amoeba).